Consider the following 397-residue polypeptide: Acetate kinase (397 aa).

Asparagine 7 is a binding site for Mg(2+). Lysine 14 serves as a coordination point for ATP. Arginine 91 contributes to the substrate binding site. The Proton donor/acceptor role is filled by aspartate 148. ATP is bound by residues 208-212, 283-285, and 331-335; these read HLGNG, DFR, and GIGEN. Residue glutamate 384 coordinates Mg(2+).

Belongs to the acetokinase family. As to quaternary structure, homodimer. Mg(2+) serves as cofactor. The cofactor is Mn(2+).

The protein localises to the cytoplasm. The enzyme catalyses acetate + ATP = acetyl phosphate + ADP. It participates in metabolic intermediate biosynthesis; acetyl-CoA biosynthesis; acetyl-CoA from acetate: step 1/2. In terms of biological role, catalyzes the formation of acetyl phosphate from acetate and ATP. Can also catalyze the reverse reaction. This is Acetate kinase from Treponema denticola (strain ATCC 35405 / DSM 14222 / CIP 103919 / JCM 8153 / KCTC 15104).